The primary structure comprises 1816 residues: Kinesin-like protein KIF1B (1816 aa).

Ser2 bears the N-acetylserine mark. In terms of domain architecture, Kinesin motor spans 5–354 (SVKVAVRVRP…LRYADRAKQI (350 aa)). Position 97 to 104 (97 to 104 (GQTGAGKS)) interacts with ATP. The interval 270-350 (NINKSLTTLG…TLSTLRYADR (81 aa)) is interaction with KIFBP. Positions 365–386 (NAKLVRELKEEVTRLKDLLRAQ) form a coiled coil. Positions 431 to 450 (FSTASMGSLTSSPSSCSLSS) are disordered. Low complexity predominate over residues 432 to 450 (STASMGSLTSSPSSCSLSS). Residues 470–502 (GEEAIERLKESEKIIAELNETWEEKLRKTEAIR) are a coiled coil. An FHA domain is found at 556 to 612 (TRVGQADAERRQDIVLSGAHIKEEHCIFRSERSNSGEVIVTLEPCERSETYVNGKRV). Phosphothreonine occurs at positions 647 and 652. Residues Gln663 and Glu665 each carry the phosphoserine modification. Coiled-coil stretches lie at residues 668–737 (EKQG…EEEV) and 841–869 (SLEKLKQRLDLMREMYDRAGEMASSAQDE). A phosphoserine mark is found at Ser1054 and Ser1057. At Thr1075 the chain carries Phosphothreonine. 4 positions are modified to phosphoserine: Asn1141, Ser1416, Ser1454, and Ser1487. The segment at 1550-1570 (STTTFESAITPSESSGYDSGD) is disordered. Polar residues predominate over residues 1554 to 1566 (FESAITPSESSGY). A phosphoserine mark is found at Ser1573, Ser1603, Ser1610, and Ser1613. A disordered region spans residues 1617–1660 (RDPSESSFSSATLTPSSTCPSLVDSRSNSLDQKTPEANSRASSP). Over residues 1621–1634 (ESSFSSATLTPSST) the composition is skewed to low complexity. A compositionally biased stretch (polar residues) spans 1640–1658 (DSRSNSLDQKTPEANSRAS). The PH domain occupies 1702–1799 (VSKKGYLHFK…WLYAFNPLLA (98 aa)).

Belongs to the TRAFAC class myosin-kinesin ATPase superfamily. Kinesin family. Unc-104 subfamily. Monomer. Interacts with KIFBP; positively regulates KIF1B microtubule motor activity. Interacts (via C-terminus end of the kinesin-motor domain) with CHP1; the interaction occurs in a calcium-dependent manner. In terms of assembly, interacts with MADD (via death domain); links this isoform to Rab3-carrying vesicles in anterograde synaptic vesicle transport. Isoform 3 is abundant in the skeletal muscle. It is also expressed in fetal brain, lung and kidney, and adult heart, placenta, testis, ovary and small intestine. Isoform 2 is abundant in the brain and also expressed in fetal heart, lung, liver and kidney, and adult skeletal muscle, placenta, liver, kidney, heart, spleen, thymus, prostate, testis, ovary, small intestine, colon and pancreas.

The protein localises to the cytoplasm. Its subcellular location is the cytoskeleton. The protein resides in the cytoplasmic vesicle. It is found in the secretory vesicle. It localises to the synaptic vesicle membrane. The protein localises to the mitochondrion. The enzyme catalyses ATP + H2O + a kinesin associated with a microtubule at position (n) = ADP + phosphate a kinesin associated with a microtubule at position (n+1, toward the plus end).. Functionally, has a plus-end-directed microtubule motor activity and functions as a motor for transport of vesicles and organelles along microtubules. In terms of biological role, has a plus-end-directed microtubule motor activity and functions as a motor for anterograde synaptic vesicle transport along axonal microtubules from the cell body to the presynapse in neuronal cells. Functions as a downstream effector in a developmental apoptotic pathway that is activated when nerve growth factor (NGF) becomes limiting for neuronal progenitor cells. Has a plus-end-directed microtubule motor activity and functions as a motor for anterograde transport of mitochondria. In Homo sapiens (Human), this protein is Kinesin-like protein KIF1B.